We begin with the raw amino-acid sequence, 85 residues long: Small ribosomal subunit protein uS17 (85 aa).

Belongs to the universal ribosomal protein uS17 family. As to quaternary structure, part of the 30S ribosomal subunit.

In terms of biological role, one of the primary rRNA binding proteins, it binds specifically to the 5'-end of 16S ribosomal RNA. This is Small ribosomal subunit protein uS17 from Mycoplasma genitalium (strain ATCC 33530 / DSM 19775 / NCTC 10195 / G37) (Mycoplasmoides genitalium).